A 324-amino-acid polypeptide reads, in one-letter code: uncharacterized protein (324 aa).

The next 8 helical transmembrane spans lie at 4–24 (GNKVVISWIVSIGFVGMPEFM), 63–83 (AALLLEYGWVLLVLIGLEGIL), 106–128 (ALFYGLAGAFVLRFGSLFAISFL), 132–151 (WQVQAIGAIYLLYISASHLL), 179–199 (LADIAFAVDSILAAVALAVTL), 209–229 (GLDGGQFLVILAGGIIGLVIM), 246–266 (LETAAFVIVGWVGVKLALYTL), and 282–302 (GTWKLIFWGVLAAIAVCGWFM).

It belongs to the TerC family.

The protein resides in the cell membrane. This is an uncharacterized protein from Bacillus subtilis (strain 168).